A 387-amino-acid chain; its full sequence is MATMITNLRRDLIEEIISRVPLRSMKAVRLTCKSWNNISKSEIFTKMQIDKATTREGKTMMISVMPHNLSLMSVAVDDVDPSVEFKGQLSFLCNQVSIHKVIHCEGLLLCFLKDHTRVVVWNPYSGQTRWVKLRYPHPPSPSKWDWFRYALGYEDKGSCRSVKFLRFLDYLPEEPENQNVCYEIYDFDSDLWTTLDVTSHSWICYSSCGVFLKGNAYWPVVKSSSEANIDHIIYFDFTRESFGPPLPLPFGATDRGYSYVNLSCVKEEKLAAFFQHYISYKYEFEIWVTTKIEAEMVSWSKFLRMDLGPNIDIPITFFIDEEKKVFMGFEHREYPKRFINIIGEAKYLRKLDLQVPQGQYCCPPLCSYVPSSIQIKKPALRQKDRAK.

Positions 2–47 constitute an F-box domain; the sequence is ATMITNLRRDLIEEIISRVPLRSMKAVRLTCKSWNNISKSEIFTKM.

This is F-box protein At5g41490 from Arabidopsis thaliana (Mouse-ear cress).